The primary structure comprises 369 residues: Chorismate synthase (369 aa).

Residues Arg-48 and Arg-54 each coordinate NADP(+). Residues 125–127, 238–239, Gly-278, 293–297, and Arg-319 each bind FMN; these read RSS, NA, and KPTSS.

This sequence belongs to the chorismate synthase family. Homotetramer. FMNH2 is required as a cofactor.

It catalyses the reaction 5-O-(1-carboxyvinyl)-3-phosphoshikimate = chorismate + phosphate. The protein operates within metabolic intermediate biosynthesis; chorismate biosynthesis; chorismate from D-erythrose 4-phosphate and phosphoenolpyruvate: step 7/7. Its function is as follows. Catalyzes the anti-1,4-elimination of the C-3 phosphate and the C-6 proR hydrogen from 5-enolpyruvylshikimate-3-phosphate (EPSP) to yield chorismate, which is the branch point compound that serves as the starting substrate for the three terminal pathways of aromatic amino acid biosynthesis. This reaction introduces a second double bond into the aromatic ring system. This chain is Chorismate synthase, found in Burkholderia thailandensis (strain ATCC 700388 / DSM 13276 / CCUG 48851 / CIP 106301 / E264).